A 369-amino-acid polypeptide reads, in one-letter code: Probable dual-specificity RNA methyltransferase RlmN (369 aa).

Glu-108 (proton acceptor) is an active-site residue. The Radical SAM core domain occupies 114 to 351 (YPDRATLCIS…LAQGVSCTVR (238 aa)). Cys-121 and Cys-362 are joined by a disulfide. Positions 128, 132, and 135 each coordinate [4Fe-4S] cluster. Residues 183 to 184 (GE), Ser-217, 240 to 242 (SLH), and Asn-319 each bind S-adenosyl-L-methionine. Cys-362 functions as the S-methylcysteine intermediate in the catalytic mechanism.

Belongs to the radical SAM superfamily. RlmN family. It depends on [4Fe-4S] cluster as a cofactor.

The protein localises to the cytoplasm. The enzyme catalyses adenosine(2503) in 23S rRNA + 2 reduced [2Fe-2S]-[ferredoxin] + 2 S-adenosyl-L-methionine = 2-methyladenosine(2503) in 23S rRNA + 5'-deoxyadenosine + L-methionine + 2 oxidized [2Fe-2S]-[ferredoxin] + S-adenosyl-L-homocysteine. It catalyses the reaction adenosine(37) in tRNA + 2 reduced [2Fe-2S]-[ferredoxin] + 2 S-adenosyl-L-methionine = 2-methyladenosine(37) in tRNA + 5'-deoxyadenosine + L-methionine + 2 oxidized [2Fe-2S]-[ferredoxin] + S-adenosyl-L-homocysteine. Specifically methylates position 2 of adenine 2503 in 23S rRNA and position 2 of adenine 37 in tRNAs. This chain is Probable dual-specificity RNA methyltransferase RlmN, found in Rhodococcus jostii (strain RHA1).